We begin with the raw amino-acid sequence, 185 residues long: Ribosome-recycling factor (185 aa).

The tract at residues 144 to 164 is disordered; the sequence is KEGEAGEDEVGRAEKDLDKTT.

Belongs to the RRF family.

The protein localises to the cytoplasm. Its function is as follows. Responsible for the release of ribosomes from messenger RNA at the termination of protein biosynthesis. May increase the efficiency of translation by recycling ribosomes from one round of translation to another. The protein is Ribosome-recycling factor of Mycobacterium tuberculosis (strain CDC 1551 / Oshkosh).